Consider the following 189-residue polypeptide: GTP cyclohydrolase 1 (189 aa).

3 residues coordinate Zn(2+): cysteine 79, histidine 82, and cysteine 150.

The protein belongs to the GTP cyclohydrolase I family. In terms of assembly, homomer.

It catalyses the reaction GTP + H2O = 7,8-dihydroneopterin 3'-triphosphate + formate + H(+). It participates in cofactor biosynthesis; 7,8-dihydroneopterin triphosphate biosynthesis; 7,8-dihydroneopterin triphosphate from GTP: step 1/1. The polypeptide is GTP cyclohydrolase 1 (Rickettsia rickettsii (strain Iowa)).